The following is a 267-amino-acid chain: Undecaprenyl-diphosphatase 1 (267 aa).

Transmembrane regions (helical) follow at residues 6–26 (VLVVALIQGLGEVLPFGAAGL), 41–60 (AALSVAAHAGILLALMIYFW), 83–103 (HLLLHVLAGTIPAAIVGWLVL), 109–129 (LVGQSGAAIILILGGVLLWGC), 142–162 (MSWVGAAGLGALQILSLVPGV), 185–205 (FSMLLAMPLILGHGVKTFWGL), 217–237 (LLMAMATAGLAALIGLAGMMA), and 244–264 (FVPFAILRIGFGIAVLGLVYF).

The protein belongs to the UppP family.

It localises to the cell inner membrane. The enzyme catalyses di-trans,octa-cis-undecaprenyl diphosphate + H2O = di-trans,octa-cis-undecaprenyl phosphate + phosphate + H(+). Its function is as follows. Catalyzes the dephosphorylation of undecaprenyl diphosphate (UPP). Confers resistance to bacitracin. This Paramagnetospirillum magneticum (strain ATCC 700264 / AMB-1) (Magnetospirillum magneticum) protein is Undecaprenyl-diphosphatase 1.